A 1060-amino-acid polypeptide reads, in one-letter code: MSTIPGFNQIQFEGFCRFIDQGLTEELSKFPKIEDTNQEIDFELFLERYQLVEPSIKERDAVYESLTYSSELYVSARLIWKNDRRRYIQEQTILIGKIPLMTSLGAFIVNGIYRIVINQILQSPGIYYQSELNDNGISVYTGTIISDWGGRLELEIDRKTRIWVRVSRQQKLSILVLLSAMGLNIREILENVCYPELFLSFLNDKKQIGSKENAILEFYQQFACVEGDPVFSESLSKDLQKKFFQQRCELGGIGRRNMNRRLNLDIPQNNTFLLPRDILAAADRLIRIKFGMGTLDDMNHLQNKRIRSVADLLQEQFGLALVRLENMARGNIYAALKHNWTPTPQNLVNSTPLTDTYKVFFRLHPLSQVLDRTNPLTQIVHGRKLSYLGPGGLTARTATFPIRDIHPSHYGRICPIDTSEGINVGLIGSLAIHARIGRWGSLESPFYKISERSKGARMLYLSPGRDEYYMVAAGNSLALNQGIQEEQVVPARYRQEFLTIAWEQVHLRSIFSFQYFSIGASLIPFIEHNDANRALMSSNMQRQAVPLSQSEKCIVGTGLEGQAALDSGALAIAEHEGEIIYTDTDKILLSGNGDTLRIPLVMYQRSNKNTCMHQKPQVQRGKCIKKGQILAYGAATVGGELALGKNVLVAYMPWEGYNFEDAVLISERLVYEDIYTSFHIRKYEIQINQGSERVTNEIPHLEVHLLRNLDKNGIVMLGSWVETGDILVGKLTPQMVKESSYAPEDRLLRTILGMRVYTSKETCLKLPIGGRGRVIDVRWVQSSKTDETEKTESIRVYILQKREIKVGDKVAGRHGNKGIISKILPRQDMPYLQDGRPVDMVFNPLGVPSRMNVGQIFESSLGLAGGLLDRHYRIAPFDERYEQEASRKLVFSELYEASKQTVNPWIFEPESPGKSRIFDGRTGDPFEQPVIIGKPYILKLIHQVDDKIHGRSSGRYSRLTQQPLKGRAKKGGQRVGEMEVWALEGFGVAYILQEMLTYKSDHIRARQEVLGTIIFGGRIPTPEDAPESFRLFVRELRSLALELNHFLVSEKTFQLNRKEA.

This sequence belongs to the RNA polymerase beta chain family. In plastids the minimal PEP RNA polymerase catalytic core is composed of four subunits: alpha, beta, beta', and beta''. When a (nuclear-encoded) sigma factor is associated with the core the holoenzyme is formed, which can initiate transcription.

Its subcellular location is the plastid. The protein resides in the chloroplast. The enzyme catalyses RNA(n) + a ribonucleoside 5'-triphosphate = RNA(n+1) + diphosphate. In terms of biological role, DNA-dependent RNA polymerase catalyzes the transcription of DNA into RNA using the four ribonucleoside triphosphates as substrates. The sequence is that of DNA-directed RNA polymerase subunit beta from Lactuca sativa (Garden lettuce).